The following is an 85-amino-acid chain: Protein RALF-like 28 (85 aa).

An N-terminal signal peptide occupies residues 1-31 (MSILKETKRFMVVAMFIACVFISNNMNVAVA). Cystine bridges form between Cys-48-Cys-53 and Cys-66-Cys-72. The segment at 60–85 (NPYHRGCEKSKRCRGPDPPALPRKMI) is disordered. Positions 75–85 (PDPPALPRKMI) are enriched in pro residues.

It belongs to the plant rapid alkalinization factor (RALF) family.

The protein resides in the secreted. Its function is as follows. Cell signaling peptide that may regulate plant stress, growth, and development. Mediates a rapid alkalinization of extracellular space by mediating a transient increase in the cytoplasmic Ca(2+) concentration leading to a calcium-dependent signaling events through a cell surface receptor and a concomitant activation of some intracellular mitogen-activated protein kinases. The chain is Protein RALF-like 28 (RALFL28) from Arabidopsis thaliana (Mouse-ear cress).